The chain runs to 231 residues: 2,3-bisphosphoglycerate-dependent phosphoglycerate mutase (231 aa).

Substrate-binding positions include 10–17 (RHGQSEWN), 23–24 (TG), R62, 89–92 (ERHY), K100, 116–117 (RR), and 185–186 (GN). Catalysis depends on H11, which acts as the Tele-phosphohistidine intermediate. Residue E89 is the Proton donor/acceptor of the active site.

This sequence belongs to the phosphoglycerate mutase family. BPG-dependent PGAM subfamily. Homodimer.

The catalysed reaction is (2R)-2-phosphoglycerate = (2R)-3-phosphoglycerate. The protein operates within carbohydrate degradation; glycolysis; pyruvate from D-glyceraldehyde 3-phosphate: step 3/5. Functionally, catalyzes the interconversion of 2-phosphoglycerate and 3-phosphoglycerate. This is 2,3-bisphosphoglycerate-dependent phosphoglycerate mutase from Buchnera aphidicola subsp. Acyrthosiphon pisum (strain APS) (Acyrthosiphon pisum symbiotic bacterium).